Reading from the N-terminus, the 717-residue chain is Ubiquitin carboxyl-terminal hydrolase 11 (717 aa).

Positions 231-268 (ATAPPVHSLEVSSQIRDSSQDSSSSLSKVEKPKEEEGK) are disordered. Low complexity predominate over residues 242 to 257 (SSQIRDSSQDSSSSLS). Residues 258–268 (KVEKPKEEEGK) show a composition bias toward basic and acidic residues. Positions 298–707 (TGLQNPCNTC…EVYVLFYERM (410 aa)) constitute a USP domain. Cys-307 functions as the Nucleophile in the catalytic mechanism. Positions 531–577 (KKEEITSQKKKSTIFGFHSRSRSKSPHHHHHHHHSSDDSTKNAKKRN) are disordered. Positions 549-564 (SRSRSKSPHHHHHHHH) are enriched in basic residues. The active-site Proton acceptor is the His-649.

The protein belongs to the peptidase C19 family.

It carries out the reaction Thiol-dependent hydrolysis of ester, thioester, amide, peptide and isopeptide bonds formed by the C-terminal Gly of ubiquitin (a 76-residue protein attached to proteins as an intracellular targeting signal).. This Saccharomyces cerevisiae (strain ATCC 204508 / S288c) (Baker's yeast) protein is Ubiquitin carboxyl-terminal hydrolase 11 (UBP11).